The chain runs to 1081 residues: Teashirt homolog 3 (1081 aa).

Disordered regions lie at residues 25–104, 141–161, and 238–257; these read LVED…EVQV, PSSE…SSCG, and HYRD…WSKP. A compositionally biased stretch (acidic residues) spans 26–37; it reads VEDDVEPEEQAA. The segment covering 68 to 87 has biased composition (basic and acidic residues); that stretch reads SSHEMDSESHISETSDRMAD. C2H2-type zinc fingers lie at residues 214–238 and 275–299; these read FRCK…ETGH and LKCM…KTKH. Over residues 238–247 the composition is skewed to basic and acidic residues; the sequence is HYRDDNHETD. Residues 325–346 form a disordered region; it reads SLELELPSSPDSTGGTPKATLS. The segment at 387-410 adopts a C2H2-type 3; atypical zinc-finger fold; that stretch reads KCMECGSSHDTLQELTAHMMVTGH. Basic and acidic residues predominate over residues 474–491; sequence VDKEKAVPDEKPKEREKP. Disordered stretches follow at residues 474–499, 626–699, 792–824, and 855–897; these read VDKE…EKYD, EKMK…KPLS, LTKG…TVTT, and TESH…RQSN. Positions 606 to 630 form a coiled coil; sequence NFHAMEELVKKVTEKVAKVEEKMKE. Over residues 660-670 the composition is skewed to polar residues; sequence SDGSFKSQENS. Position 682 is a phosphoserine (S682). Low complexity-rich tracts occupy residues 800-824 and 856-869; these read GCSL…TVTT and ESHT…SSIS. The homeobox; atypical DNA-binding region spans 891 to 961; the sequence is RKGRQSNWNP…NVKYQLRRTG (71 aa). 2 C2H2-type zinc fingers span residues 976–998 and 1041–1064; these read FFCN…LESH and YQCK…SKTH.

This sequence belongs to the teashirt C2H2-type zinc-finger protein family. In terms of assembly, interacts (via N-terminus) with HDAC1 and HDAC2; the interaction is direct. Found in a trimeric complex with APBB1 and HDAC1; the interaction between HDAC1 and APBB1 is mediated by TSHZ3. Interacts (via homeobox domain) with APBB1 (via PID domain 1). As to expression, expressed in corticostriatal neurons.

It is found in the nucleus. Its subcellular location is the cell projection. The protein localises to the growth cone. Transcriptional regulator involved in developmental processes. Functions in association with APBB1, SET and HDAC factors as a transcriptional repressor, that inhibits the expression of CASP4. TSHZ3-mediated transcription repression involves the recruitment of histone deacetylases HDAC1 and HDAC2. Associates with chromatin in a region surrounding the CASP4 transcriptional start site(s). Regulates the development of neurons involved in both respiratory rhythm and airflow control. Promotes maintenance of nucleus ambiguus (nA) motoneurons, which govern upper airway function, and establishes a respiratory rhythm generator (RRG) activity compatible with survival at birth. Involved in the differentiation of the proximal uretic smooth muscle cells during developmental processes. Involved in the up-regulation of myocardin, that directs the expression of smooth muscle cells in the proximal ureter. Involved in the modulation of glutamatergic synaptic transmission and long-term synaptic potentiation. The sequence is that of Teashirt homolog 3 (Tshz3) from Mus musculus (Mouse).